Here is a 295-residue protein sequence, read N- to C-terminus: Putative fused nickel transport protein NikMN (295 aa).

8 consecutive transmembrane segments (helical) span residues L8–I28, L39–G59, L70–I90, G98–G118, F135–I155, A175–A195, L211–V231, and A268–L288.

Belongs to the CbiM family. NikM subfamily.

It localises to the cell membrane. May be involved in nickel transport. This is Putative fused nickel transport protein NikMN from Archaeoglobus fulgidus (strain ATCC 49558 / DSM 4304 / JCM 9628 / NBRC 100126 / VC-16).